Reading from the N-terminus, the 356-residue chain is NADH-quinone oxidoreductase subunit H (356 aa).

The next 9 helical transmembrane spans lie at 16-36 (IAVLQILAFAVVLLISLAFLL), 52-72 (PNVVGAFGLLQSFADFFKFVF), 85-105 (LYLLAPLITLILAFVTWAVVP), 117-137 (VGILYLFAMSSLGVYGIIIGG), 163-183 (IGFIIVTVLLFAGSMNLSEII), 201-221 (WPMPMFLVMIPMAVIFFISAL), 254-274 (FMVGEYLNIVLMCAMTAILFF), 295-315 (AWYFFWFAAKIVFFFFMFAMV), and 334-354 (IFLPISLAAVALVGAAVVYGP).

The protein belongs to the complex I subunit 1 family. As to quaternary structure, NDH-1 is composed of 14 different subunits. Subunits NuoA, H, J, K, L, M, N constitute the membrane sector of the complex.

The protein resides in the cell inner membrane. The catalysed reaction is a quinone + NADH + 5 H(+)(in) = a quinol + NAD(+) + 4 H(+)(out). Its function is as follows. NDH-1 shuttles electrons from NADH, via FMN and iron-sulfur (Fe-S) centers, to quinones in the respiratory chain. The immediate electron acceptor for the enzyme in this species is believed to be ubiquinone. Couples the redox reaction to proton translocation (for every two electrons transferred, four hydrogen ions are translocated across the cytoplasmic membrane), and thus conserves the redox energy in a proton gradient. This subunit may bind ubiquinone. This is NADH-quinone oxidoreductase subunit H from Maricaulis maris (strain MCS10) (Caulobacter maris).